Consider the following 882-residue polypeptide: Alanine--tRNA ligase (882 aa).

Zn(2+)-binding residues include His567, His571, Cys669, and His673.

The protein belongs to the class-II aminoacyl-tRNA synthetase family. Requires Zn(2+) as cofactor.

It is found in the cytoplasm. It catalyses the reaction tRNA(Ala) + L-alanine + ATP = L-alanyl-tRNA(Ala) + AMP + diphosphate. Catalyzes the attachment of alanine to tRNA(Ala) in a two-step reaction: alanine is first activated by ATP to form Ala-AMP and then transferred to the acceptor end of tRNA(Ala). Also edits incorrectly charged Ser-tRNA(Ala) and Gly-tRNA(Ala) via its editing domain. This is Alanine--tRNA ligase from Thermosynechococcus vestitus (strain NIES-2133 / IAM M-273 / BP-1).